The primary structure comprises 432 residues: Enolase (432 aa).

Q163 serves as a coordination point for (2R)-2-phosphoglycerate. Catalysis depends on E205, which acts as the Proton donor. Residues D242, E287, and D314 each contribute to the Mg(2+) site. (2R)-2-phosphoglycerate is bound by residues K339, R368, S369, and K390. Residue K339 is the Proton acceptor of the active site.

The protein belongs to the enolase family. The cofactor is Mg(2+).

The protein resides in the cytoplasm. It localises to the secreted. The protein localises to the cell surface. It carries out the reaction (2R)-2-phosphoglycerate = phosphoenolpyruvate + H2O. The protein operates within carbohydrate degradation; glycolysis; pyruvate from D-glyceraldehyde 3-phosphate: step 4/5. Catalyzes the reversible conversion of 2-phosphoglycerate (2-PG) into phosphoenolpyruvate (PEP). It is essential for the degradation of carbohydrates via glycolysis. This is Enolase from Myxococcus xanthus (strain DK1622).